Consider the following 81-residue polypeptide: Large ribosomal subunit protein bL31B (81 aa).

The protein belongs to the bacterial ribosomal protein bL31 family. Type B subfamily. Part of the 50S ribosomal subunit.

The sequence is that of Large ribosomal subunit protein bL31B from Limosilactobacillus reuteri (strain DSM 20016) (Lactobacillus reuteri).